We begin with the raw amino-acid sequence, 429 residues long: Chordin-like protein 2 (429 aa).

A signal peptide spans 1-25 (MVPEVRVLSSLLGLALLWFPLDSHA). VWFC domains lie at 31-96 (MFCL…PKCV) and 109-175 (KSCQ…QACK). Asn-114 is a glycosylation site (N-linked (GlcNAc...) asparagine). Phosphoserine; by FAM20C is present on Ser-182. The disordered stretch occupies residues 182-224 (SDEEDSVQSLHGVRHPQDPCSSDAGRKRGPGTPAPTGLSAPLS). The region spanning 250 to 315 (KACVHGGKTY…VAGKCCKICP (66 aa)) is the VWFC 3 domain.

As to quaternary structure, interacts with GDF5. May interact with BMP2, BMP4, BMP5, BMP6, BMP7 and INHBA. Post-translationally, phosphorylated by FAM20C in the extracellular medium. In terms of tissue distribution, highly expressed in uterus. Moderately expressed in heart, liver, prostate, testis and ovary. Weakly expressed in skeletal muscle, kidney, spleen, small intestine and colon. Expressed in the secretory epithelial cells of uterine endometrium, fallopian tubes, endocervical glands, bladder and prostate, as well as the transitional epithelium of the urinary bladder, and in bone osteoblasts (at protein level). In normal cartilage, expression was confined in a few chondrocytes in the superficial zone as well as in the middle zone. In diseased cartilage coming from osteoarthritic patients, expression was limited to the middle zone of chondrocytes. Isoform 1 and isoform 2 are expressed in fetal cerebellum and heart, while only isoform 2 is detected in fetal spleen. Isoform 2 present in plasma.

It is found in the secreted. Its subcellular location is the cytoplasm. Its function is as follows. May inhibit BMPs activity by blocking their interaction with their receptors. Has a negative regulator effect on the cartilage formation/regeneration from immature mesenchymal cells, by preventing or reducing the rate of matrix accumulation. Implicated in tumor angiogenesis. May play a role during myoblast and osteoblast differentiation, and maturation. The chain is Chordin-like protein 2 (CHRDL2) from Homo sapiens (Human).